Reading from the N-terminus, the 223-residue chain is Deoxyribose-phosphate aldolase (223 aa).

Aspartate 91 serves as the catalytic Proton donor/acceptor. Lysine 154 (schiff-base intermediate with acetaldehyde) is an active-site residue. Residue lysine 183 is the Proton donor/acceptor of the active site.

It belongs to the DeoC/FbaB aldolase family. DeoC type 1 subfamily.

The protein localises to the cytoplasm. It carries out the reaction 2-deoxy-D-ribose 5-phosphate = D-glyceraldehyde 3-phosphate + acetaldehyde. It functions in the pathway carbohydrate degradation; 2-deoxy-D-ribose 1-phosphate degradation; D-glyceraldehyde 3-phosphate and acetaldehyde from 2-deoxy-alpha-D-ribose 1-phosphate: step 2/2. Functionally, catalyzes a reversible aldol reaction between acetaldehyde and D-glyceraldehyde 3-phosphate to generate 2-deoxy-D-ribose 5-phosphate. In Geobacillus thermodenitrificans (strain NG80-2), this protein is Deoxyribose-phosphate aldolase.